The primary structure comprises 307 residues: Probable 2-methylisocitrate lyase 2 (307 aa).

Substrate is bound at residue 53 to 55 (SGA). D92 and D94 together coordinate Mg(2+). Substrate contacts are provided by residues 129–130 (CG), R164, E194, 216–218 (NMT), R247, and R276.

It belongs to the isocitrate lyase/PEP mutase superfamily. Methylisocitrate lyase family. As to quaternary structure, homotetramer; dimer of dimers. Requires Mg(2+) as cofactor.

It carries out the reaction (2S,3R)-3-hydroxybutane-1,2,3-tricarboxylate = pyruvate + succinate. It participates in organic acid metabolism; propanoate degradation. Its function is as follows. Involved in the catabolism of short chain fatty acids (SCFA) via the 2-methylcitrate cycle I (propionate degradation route). Catalyzes the thermodynamically favored C-C bond cleavage of (2R,3S)-2-methylisocitrate to yield pyruvate and succinate via an alpha-carboxy-carbanion intermediate. In Corynebacterium glutamicum (strain ATCC 13032 / DSM 20300 / JCM 1318 / BCRC 11384 / CCUG 27702 / LMG 3730 / NBRC 12168 / NCIMB 10025 / NRRL B-2784 / 534), this protein is Probable 2-methylisocitrate lyase 2.